The primary structure comprises 454 residues: MEVNRLAYLTAMGSLRPPSPNGDWSKPQDAPHKSVIDMMASGVSHIKVLKVDIDAQHLCVCLPHNMLTCCHPAVDMENLLGSGSFGKVYASGPGICAKVFTSAEAFYHETVMMDLVALARSYNCDDFKSVCLQFYLSACVTCKTIWYPRFSQSLHTFKDFTVDHLHDLDREFKGLTDAVFFLNQKCGLFHGDICPSNILVETFKGPGSGIKSLILTDLGTAAIHAGNTFKSLSINNPQDDSVIYNAQIYLSPFLVCKDYVKPLCVLRRCYLLRHHAQDVDVEEITDTVVGQNMALKIDCSTLLQVLLLVLARVMEQPNSLTYESWLREIEDDSSDAYFLLLLGPKLVLLTHLSQLWEINFDVGVNTQGVLSRGQLPHPHTRLLKECCQLFREEFDAVVKEEVLIKLGQGVLKNIIFELLQFDYFEIHGRQPQHGLFAQSHAARADSEHGNWRTS.

ATP-binding positions include 80–88 (LGSGSFGKV) and Lys-98. Asp-192 serves as the catalytic Proton acceptor.

It belongs to the protein kinase superfamily. Tyr protein kinase family.

The catalysed reaction is L-tyrosyl-[protein] + ATP = O-phospho-L-tyrosyl-[protein] + ADP + H(+). This chain is Putative tyrosine kinase 36 (36), found in Alcelaphine herpesvirus 1 (strain C500) (AlHV-1).